A 392-amino-acid chain; its full sequence is GTPase Obg (392 aa).

The Obg domain occupies 1–159 (MKFIDEALIR…RDLQLELMLL (159 aa)). Residues 160–333 (ADVGMLGLPN…LCRDIMDFIE (174 aa)) form the OBG-type G domain. Residues 166–173 (GLPNAGKS), 191–195 (FTTLV), 213–216 (DIPG), 283–286 (NKID), and 314–316 (SAA) contribute to the GTP site. Mg(2+) contacts are provided by serine 173 and threonine 193. The interval 362–392 (EQVFTEDDQEGDDWDDWSEDDEEGVEIIYKP) is disordered. Residues 365-386 (FTEDDQEGDDWDDWSEDDEEGV) show a composition bias toward acidic residues.

This sequence belongs to the TRAFAC class OBG-HflX-like GTPase superfamily. OBG GTPase family. As to quaternary structure, monomer. Mg(2+) serves as cofactor.

Its subcellular location is the cytoplasm. In terms of biological role, an essential GTPase which binds GTP, GDP and possibly (p)ppGpp with moderate affinity, with high nucleotide exchange rates and a fairly low GTP hydrolysis rate. Plays a role in control of the cell cycle, stress response, ribosome biogenesis and in those bacteria that undergo differentiation, in morphogenesis control. The chain is GTPase Obg from Histophilus somni (strain 129Pt) (Haemophilus somnus).